The chain runs to 148 residues: Lysozyme C (148 aa).

Positions 1–18 (MKALIILGLVLLSVTVQG) are cleaved as a signal peptide. One can recognise a C-type lysozyme domain in the interval 19–148 (KIFERCELAR…VSQYVKGCGV (130 aa)). 4 disulfide bridges follow: Cys24–Cys146, Cys48–Cys134, Cys83–Cys99, and Cys95–Cys113. Active-site residues include Glu53 and Asp71.

The protein belongs to the glycosyl hydrolase 22 family. In terms of assembly, monomer.

It is found in the secreted. The enzyme catalyses Hydrolysis of (1-&gt;4)-beta-linkages between N-acetylmuramic acid and N-acetyl-D-glucosamine residues in a peptidoglycan and between N-acetyl-D-glucosamine residues in chitodextrins.. Its function is as follows. Lysozymes have primarily a bacteriolytic function; those in tissues and body fluids are associated with the monocyte-macrophage system and enhance the activity of immunoagents. This Pygathrix nemaeus (Red-shanked douc langur) protein is Lysozyme C (LYZ).